The following is a 628-amino-acid chain: Chaperone protein HtpG (628 aa).

The tract at residues M1–R334 is a; substrate-binding. The segment at E335–K550 is b. The interval M551 to G628 is c.

Belongs to the heat shock protein 90 family. Homodimer.

Its subcellular location is the cytoplasm. Molecular chaperone. Has ATPase activity. The sequence is that of Chaperone protein HtpG from Rhodopseudomonas palustris (strain HaA2).